We begin with the raw amino-acid sequence, 494 residues long: ATP synthase subunit beta, plastid (494 aa).

Gly169–Thr176 provides a ligand contact to ATP.

It belongs to the ATPase alpha/beta chains family. As to quaternary structure, F-type ATPases have 2 components, CF(1) - the catalytic core - and CF(0) - the membrane proton channel. CF(1) has five subunits: alpha(3), beta(3), gamma(1), delta(1), epsilon(1). CF(0) has four main subunits: a(1), b(1), b'(1) and c(9-12).

Its subcellular location is the plastid thylakoid membrane. The enzyme catalyses ATP + H2O + 4 H(+)(in) = ADP + phosphate + 5 H(+)(out). Its function is as follows. Produces ATP from ADP in the presence of a proton gradient across the membrane. The catalytic sites are hosted primarily by the beta subunits. This Cuscuta gronovii (Common dodder) protein is ATP synthase subunit beta, plastid (atpB).